A 145-amino-acid polypeptide reads, in one-letter code: Transcriptional regulator MraZ (145 aa).

2 SpoVT-AbrB domains span residues 5–50 (TFNH…ALPQ) and 81–124 (AHEV…DKAA).

It belongs to the MraZ family. In terms of assembly, forms oligomers.

It localises to the cytoplasm. The protein resides in the nucleoid. This chain is Transcriptional regulator MraZ, found in Anaeromyxobacter sp. (strain Fw109-5).